We begin with the raw amino-acid sequence, 258 residues long: Snake venom serine protease 5 (258 aa).

The first 18 residues, 1-18 (MVLIRVLANLLILQLSYA), serve as a signal peptide directing secretion. The propeptide occupies 19-24 (QKSSEL). The region spanning 25 to 249 (VVGGRPCNIN…HLDWIQNIIA (225 aa)) is the Peptidase S1 domain. Cystine bridges form between Cys-31/Cys-163, Cys-50/Cys-66, Cys-98/Cys-256, Cys-142/Cys-210, Cys-174/Cys-189, and Cys-200/Cys-225. Residue Asn-44 is glycosylated (N-linked (GlcNAc...) asparagine). Residue His-65 is the Charge relay system of the active site. Residue Asn-103 is glycosylated (N-linked (GlcNAc...) asparagine). The active-site Charge relay system is the Asp-110. 4 N-linked (GlcNAc...) asparagine glycosylation sites follow: Asn-121, Asn-122, Asn-154, and Asn-170. The Charge relay system role is filled by Ser-204. Asn-251 is a glycosylation site (N-linked (GlcNAc...) asparagine).

The protein belongs to the peptidase S1 family. Snake venom subfamily. Monomer. In terms of tissue distribution, expressed by the venom gland.

It localises to the secreted. Its function is as follows. Snake venom serine protease that may act in the hemostasis system of the prey. This chain is Snake venom serine protease 5, found in Trimeresurus stejnegeri (Chinese green tree viper).